A 278-amino-acid chain; its full sequence is MIEWKTFCTIFWQRFNQNKLTQAAGYLTYSTMLAIVPLIMVVFSIFSAFPVFNEVTGALKEFIFTNFAPSASDVVGQYIDEFVNNSKQMSAVGIISLIVVALMLINSIDRTLNSIWHDTSTRPIFTSFAIYWLILTLGPLLVGTSIAASAYVKTMFENASGFSFGLKLLSFVPFLSTWFIFTVIYMVVPNKKVSIKHSAAGALIAAVFFTLGKQAFAWYIVTFPSYQLIYGAMATLPIMLLWIQLSWTFVLLGAQLAAVLAEVRSEKMINLEQIEETK.

6 consecutive transmembrane segments (helical) span residues 32–52, 88–108, 123–143, 168–188, 203–223, and 232–252; these read MLAIVPLIMVVFSIFSAFPVF, QMSAVGIISLIVVALMLINSI, PIFTSFAIYWLILTLGPLLVG, LLSFVPFLSTWFIFTVIYMVV, LIAAVFFTLGKQAFAWYIVTF, and AMATLPIMLLWIQLSWTFVLL.

Belongs to the UPF0761 family.

Its subcellular location is the cell inner membrane. The sequence is that of UPF0761 membrane protein NT05HA_1801 from Aggregatibacter aphrophilus (strain NJ8700) (Haemophilus aphrophilus).